The sequence spans 321 residues: Putative membrane-bound redox modulator Alx (321 aa).

The Periplasmic portion of the chain corresponds to 1–6; that stretch reads MNTVGT. A helical transmembrane segment spans residues 7 to 27; the sequence is PLLWGGFAVVVAIMLAIDLLL. Residues 28–43 are Cytoplasmic-facing; sequence QGRRGAHAMTMKQAAA. A helical transmembrane segment spans residues 44-64; sequence WSLVWVTLSLLFNAAFWWYLV. Residues 65–89 are Periplasmic-facing; the sequence is QTEGRAVADPQALAFLTGYLIEKSL. Residues 90–110 form a helical membrane-spanning segment; it reads AVDNVFVWLMLFSYFSVPAAL. The Cytoplasmic portion of the chain corresponds to 111-113; sequence QRR. Residues 114 to 134 traverse the membrane as a helical segment; it reads VLVYGVLGAIVLRTIMIFTGS. A topological domain (periplasmic) is located at residue Trp135. Residues 136 to 156 form a helical membrane-spanning segment; that stretch reads LISQFDWILYIFGAFLLFTGV. Residues 157–198 lie on the Cytoplasmic side of the membrane; the sequence is KMALAHEDESGIGDKPLVRWLRGHLRMTDTIDNEHFFVRKNG. The helical transmembrane segment at 199-219 threads the bilayer; sequence LLYATPLMLVLILVELSDVIF. At 220–225 the chain is on the periplasmic side; that stretch reads AVDSIP. A helical membrane pass occupies residues 226 to 246; it reads AIFAVTTDPFIVLTSNLFAIL. Residues 247–261 lie on the Cytoplasmic side of the membrane; that stretch reads GLRAMYFLLAGVAER. A helical transmembrane segment spans residues 262 to 282; that stretch reads FSMLKYGLAVILVFIGIKMLI. Residues 283-286 are Periplasmic-facing; it reads VDFY. A helical membrane pass occupies residues 287–307; that stretch reads HIPIAVSLGVVFGILVMTFII. The Cytoplasmic segment spans residues 308-321; that stretch reads NAWVNYRHDKQRVG.

Belongs to the TerC family.

Its subcellular location is the cell inner membrane. Functionally, has been proposed to be a redox modulator. The protein is Putative membrane-bound redox modulator Alx (alx) of Escherichia coli O157:H7.